Consider the following 906-residue polypeptide: Protein translocase subunit SecA (906 aa).

Residues glutamine 89, 107 to 111, and aspartate 502 contribute to the ATP site; that span reads GEGKT. Residues 868–887 form a disordered region; sequence VPPAQRDPADPRTWGKVSRN. Positions 890, 892, 901, and 902 each coordinate Zn(2+).

It belongs to the SecA family. In terms of assembly, monomer and homodimer. Part of the essential Sec protein translocation apparatus which comprises SecA, SecYEG and auxiliary proteins SecDF-YajC and YidC. It depends on Zn(2+) as a cofactor.

The protein localises to the cell inner membrane. It is found in the cytoplasm. It catalyses the reaction ATP + H2O + cellular proteinSide 1 = ADP + phosphate + cellular proteinSide 2.. Its function is as follows. Part of the Sec protein translocase complex. Interacts with the SecYEG preprotein conducting channel. Has a central role in coupling the hydrolysis of ATP to the transfer of proteins into and across the cell membrane, serving both as a receptor for the preprotein-SecB complex and as an ATP-driven molecular motor driving the stepwise translocation of polypeptide chains across the membrane. The polypeptide is Protein translocase subunit SecA (Brucella melitensis biotype 1 (strain ATCC 23456 / CCUG 17765 / NCTC 10094 / 16M)).